A 213-amino-acid chain; its full sequence is Outer-membrane lipoprotein carrier protein (213 aa).

The first 18 residues, 1–18 (MKYFATICIAAYAGLAGA), serve as a signal peptide directing secretion.

It belongs to the LolA family. As to quaternary structure, monomer.

The protein resides in the periplasm. Functionally, participates in the translocation of lipoproteins from the inner membrane to the outer membrane. Only forms a complex with a lipoprotein if the residue after the N-terminal Cys is not an aspartate (The Asp acts as a targeting signal to indicate that the lipoprotein should stay in the inner membrane). This chain is Outer-membrane lipoprotein carrier protein, found in Albidiferax ferrireducens (strain ATCC BAA-621 / DSM 15236 / T118) (Rhodoferax ferrireducens).